Consider the following 724-residue polypeptide: Hyperosmolality-gated Ca2+ permeable channel 3.1 (724 aa).

Residues 1-4 (MEFG) are Extracellular-facing. A helical membrane pass occupies residues 5 to 25 (SFLVSLGTSFVIFVILMLLFT). Residues 26-85 (WLSRKSGNAPIYYPNRILKGLEPWEGTSLTRNPFAWMREALTSSEQDVVNLSGVDTAVHF) lie on the Cytoplasmic side of the membrane. Residues 86-108 (VFLSTVLGIFACSSLLLLPTLLP) form a helical membrane-spanning segment. Over 109–147 (LAATDNNIKNTKNATDTTSKGTFSQLDNLSMANITKKSS) the chain is Extracellular. The helical transmembrane segment at 148-170 (RLWAFLGAVYWISLVTYFFLWKA) threads the bilayer. Topologically, residues 171 to 358 (YKHVSSLRAQ…WQNLNIKLFS (188 aa)) are cytoplasmic. The stretch at 241-309 (EKLEGYKKKL…KAVLAEKQQT (69 aa)) forms a coiled coil. The chain crosses the membrane as a helical span at residues 359–385 (RIIRQYFIYFFVAVTILFYMIPIAFVS). Over 386-411 (AITTLKNLQRIIPFIKPVVEITAIRT) the chain is Extracellular. Residues 412-439 (VLESFLPQIALIVFLAMLPKLLLFLSKA) traverse the membrane as a helical segment. At 440-448 (EGIPSQSHA) the chain is on the cytoplasmic side. Residues 449 to 472 (IRAASGKYFYFSVFNVFIGVTLAG) traverse the membrane as a helical segment. The Extracellular portion of the chain corresponds to 473 to 497 (TLFNTVKDIAKNPKLDMIINLLATS). Residues 498 to 529 (LPKSATFFLTYVALKFFIGYGLELSRIIPLII) form a helical membrane-spanning segment. Residues 530–554 (FHLKKKYLCKTEAEVKEAWYPGDLS) are Cytoplasmic-facing. Residues 555–574 (YATRVPGDMLILTITFCYSV) form a helical membrane-spanning segment. Residue Ile575 is a topological domain, extracellular. Residues 576–594 (APLILIFGITYFGLGWLVL) traverse the membrane as a helical segment. At 595-612 (RNQALKVYVPSYESYGRM) the chain is on the cytoplasmic side. A helical transmembrane segment spans residues 613–636 (WPHIHQRILAALFLFQVVMFGYLG). The Extracellular segment spans residues 637–641 (AKTFF). The chain crosses the membrane as a helical span at residues 642–662 (YTALVIPLIITSLIFGYVCRQ). At 663 to 724 (KFYGGFEHTA…YQDFNAIAGV (62 aa)) the chain is on the cytoplasmic side.

Belongs to the CSC1 (TC 1.A.17) family. Homodimer.

It is found in the membrane. Its function is as follows. Acts as a hyperosmolarity-gated non-selective cation channel that permeates Ca(2+) ions. Mechanosensitive ion channel that converts mechanical stimuli into a flow of ions: activated in response to membrane stretch. Not activated in response to membrane poke. The chain is Hyperosmolality-gated Ca2+ permeable channel 3.1 from Arabidopsis thaliana (Mouse-ear cress).